The primary structure comprises 226 residues: Cytidylate kinase (226 aa).

12–20 (GPSGAGKGT) contacts ATP.

Belongs to the cytidylate kinase family. Type 1 subfamily.

The protein localises to the cytoplasm. It carries out the reaction CMP + ATP = CDP + ADP. The enzyme catalyses dCMP + ATP = dCDP + ADP. The sequence is that of Cytidylate kinase from Vibrio parahaemolyticus serotype O3:K6 (strain RIMD 2210633).